The following is a 459-amino-acid chain: Cysteine--tRNA ligase (459 aa).

Cys28 is a Zn(2+) binding site. The 'HIGH' region motif lies at 30-40; that stretch reads ITIYDLCHIGH. Residues Cys209, His234, and Glu238 each coordinate Zn(2+). The short motif at 266–270 is the 'KMSKS' region element; that stretch reads KMSKS. Lys269 provides a ligand contact to ATP.

It belongs to the class-I aminoacyl-tRNA synthetase family. As to quaternary structure, monomer. Requires Zn(2+) as cofactor.

It localises to the cytoplasm. The catalysed reaction is tRNA(Cys) + L-cysteine + ATP = L-cysteinyl-tRNA(Cys) + AMP + diphosphate. The sequence is that of Cysteine--tRNA ligase from Shewanella sediminis (strain HAW-EB3).